The following is a 1663-amino-acid chain: Cortactin-binding protein 2 (1663 aa).

5 disordered regions span residues 1–23 (MATDGASCEPDLSRAPEDAAGAA), 203–222 (KKKTNELEEELSAEKRRSTE), 358–440 (RQAS…LHPG), 454–479 (GNANDPDQNGNTTQSPPSRDMSPTSR), and 498–616 (RFTS…PKPS). Positions 119–276 (KKMQERMSAQ…EQLKRGSDSK (158 aa)) form a coiled coil. The span at 386 to 396 (PSTDSTPDPTS) shows a compositional bias: low complexity. Residues 411–422 (QTPGIAPQNSQA) show a composition bias toward polar residues. Arg498 is subject to Asymmetric dimethylarginine. Polar residues predominate over residues 583-597 (TVASPPSSLPQGNRV). ANK repeat units lie at residues 709 to 739 (GRPTLLQQAAAQGNVTLLSMLLNEEGLDINY), 743 to 772 (DGHSALYSAAKNGHTDCVRLLLSAEAQINA), 776 to 805 (NGFTPLCAAAAQGHFECVELLIAYDANINH), 809 to 838 (GGQTPLYLACKNENKECIKLLLEAGTNRSV), 842 to 871 (DGWTPVHAAVDTGNVDSLKLLMYHRIPACG), and 912 to 942 (EGWTAAHIAASKGFKNCLEILCRHGGLEPER). Residues 1447–1477 (KKKGESGAWRKVNTSPRRKSGRFSLPTWNKP) are disordered. Ser1524 carries the post-translational modification Phosphoserine. 2 disordered regions span residues 1581-1602 (QKEVSPLSSHQTTECSNSKSKT) and 1618-1663 (SKVT…KHNK). Residues 1582 to 1599 (KEVSPLSSHQTTECSNSK) are compositionally biased toward polar residues. Over residues 1624 to 1638 (SQNTKRSSSSSNTRQ) the composition is skewed to low complexity. The span at 1645–1663 (SKEENWNLHKNEHLDKHNK) shows a compositional bias: basic and acidic residues.

As to quaternary structure, interacts with CTTN/cortactin SH3 domain. Interacts with STRN, STRN4/zinedin and MOB4/phocein; this interactions mediate the association with the STRIPAK core complex and may regulate dendritic spine distribution of the STRIPAK complex in hippocampal neurons. Activation of glutamate receptors weakens the interaction with STRN and STRN4.

It localises to the cytoplasm. It is found in the cell cortex. Its subcellular location is the cell projection. The protein localises to the dendritic spine. Its function is as follows. Regulates the dendritic spine distribution of CTTN/cortactin in hippocampal neurons, and thus controls dendritic spinogenesis and dendritic spine maintenance. Associates with the striatin-interacting phosphatase and kinase (STRIPAK) core complex to regulate dendritic spine distribution of the STRIPAK complex in hippocampal neurons. This chain is Cortactin-binding protein 2 (CTTNBP2), found in Papio anubis (Olive baboon).